The chain runs to 572 residues: MGSEPFQKKNLGLQINSQESGTTRSTFHSLEDLGDDVINESWDQVNQKRANIDHDVFHEHPDSSPSLSAQKAKTKEEEVAVKSSNSQSRDPSPDTQAHIPYTYFSKDQRLIIFGIIIFIGFLGPMSGNIYIPALPLLQREYDVSATTINATVSVFMAVFSVGPLFWGALADFGGRKFLYMVSLSLMLIVNILLAAVPVNIAALFVLRIFQAFASSSVISLGAGTVTDVVPPKHRGKAIAYFMMGPNMGPIIAPIVAGLILMKGNYWRWLFGFTSIMTGIALILVTALLPETLRCIVGNGDPKWGDKKDERENNESPFFEGNKISHRRLFPDIGIRKPVNNDAFFQENFPKPPKAGLTLYWKMIKCPPIIITSVSTALLFSSYYAFSVTFSYYLEHDYRFTMLEIGAAYVCPGVAMLLGSQSGGHLSDYLRSRWIKSHPKKKFPAEFRLLLNLIGILLTICGTIGYGWAIFFHYHFVVLLVFSALTAFGMTWCSNTSMTYLTELFPKRAAGTVAVSSFFRNVGAAISSAIILQLCNAMGIGWCFTGLGLCSSISLIGILYLLIFQRKYTAKEF.

Disordered stretches follow at residues 1-28 (MGSE…STFH) and 49-95 (RANI…SPDT). Over 1-110 (MGSEPFQKKN…YTYFSKDQRL (110 aa)) the chain is Cytoplasmic. Over residues 13-28 (LQINSQESGTTRSTFH) the composition is skewed to polar residues. Residues 50–62 (ANIDHDVFHEHPD) show a composition bias toward basic and acidic residues. Residues 83–95 (SSNSQSRDPSPDT) are compositionally biased toward polar residues. A helical membrane pass occupies residues 111–131 (IIFGIIIFIGFLGPMSGNIYI). At 132–149 (PALPLLQREYDVSATTIN) the chain is on the extracellular side. Residues 150-170 (ATVSVFMAVFSVGPLFWGALA) traverse the membrane as a helical segment. The Cytoplasmic segment spans residues 171-184 (DFGGRKFLYMVSLS). The chain crosses the membrane as a helical span at residues 185–205 (LMLIVNILLAAVPVNIAALFV). Topologically, residues 206–207 (LR) are extracellular. The chain crosses the membrane as a helical span at residues 208 to 228 (IFQAFASSSVISLGAGTVTDV). At 229 to 240 (VPPKHRGKAIAY) the chain is on the cytoplasmic side. A helical membrane pass occupies residues 241–261 (FMMGPNMGPIIAPIVAGLILM). Over 262–267 (KGNYWR) the chain is Extracellular. Residues 268–288 (WLFGFTSIMTGIALILVTALL) traverse the membrane as a helical segment. Topologically, residues 289–366 (PETLRCIVGN…TLYWKMIKCP (78 aa)) are cytoplasmic. The chain crosses the membrane as a helical span at residues 367–387 (PIIITSVSTALLFSSYYAFSV). The Extracellular portion of the chain corresponds to 388 to 398 (TFSYYLEHDYR). A helical membrane pass occupies residues 399–419 (FTMLEIGAAYVCPGVAMLLGS). Residues 420–446 (QSGGHLSDYLRSRWIKSHPKKKFPAEF) are Cytoplasmic-facing. A helical transmembrane segment spans residues 447–469 (RLLLNLIGILLTICGTIGYGWAI). At 470-472 (FFH) the chain is on the extracellular side. The chain crosses the membrane as a helical span at residues 473–493 (YHFVVLLVFSALTAFGMTWCS). Residues 494–520 (NTSMTYLTELFPKRAAGTVAVSSFFRN) are Cytoplasmic-facing. A helical membrane pass occupies residues 521 to 541 (VGAAISSAIILQLCNAMGIGW). C542 is a topological domain (extracellular). Residues 543-563 (FTGLGLCSSISLIGILYLLIF) traverse the membrane as a helical segment. Positions 548-572 (LCSSISLIGILYLLIFQRKYTAKEF) are required for the localization to the prospore membrane. Residues 564–572 (QRKYTAKEF) are Cytoplasmic-facing.

It belongs to the major facilitator superfamily. CAR1 family. Post-translationally, phosphorylated.

The protein localises to the prospore membrane. In terms of biological role, prospore-specific dityrosine transporter responsible for translocation of dityrosine through the prospore membrane and required for the formation of the outermost layer of the spore. This chain is Dityrosine transporter 1 (DTR1), found in Saccharomyces cerevisiae (strain ATCC 204508 / S288c) (Baker's yeast).